The sequence spans 434 residues: MKLSHLAAALSAQLVAPVAAGYLRQDILTAGTLRDTTVPAAPNEDLNQIVSDSQLLSLHRTICEIESVSNHESTVGEALIKYLGEHDFTTEKQIVPVDEDDDSTDERYNVWAYPKGSPKPKIILTSHIDTVPPHINYSLHAPEGDFDRANITIKGRGTVDAKASVAAMIIAALDHMKESPDVPVGLLFVVSEERGGTGMIHFSDSELNTSPPFFHTLIFGEPTELKLVDGHKGNLRFDVEAKGVSAHSGYPWLGHSAISEILPVLARIDGLGDIPVEDGGLPSSEKYGSTTLNIGTVRGGAAGNVVPESASASVAVRLADGTVEDAQDIIRKAVADASGGSKNITLKFPDDKAYPPIDLDTDVDGFELLTVNYGTDIPKLDIHDEDSDVKVKRYLYGPGTILVAHGVDEGLTVGDLEKAVEGYSKLIDAAVKRG.

Positions Met1–Ala20 are cleaved as a signal peptide. N-linked (GlcNAc...) asparagine glycosylation is found at Asn136 and Asn150. Asp160 provides a ligand contact to Zn(2+). The active-site Proton acceptor is Glu192. Glu193 contributes to the Zn(2+) binding site. A glycan (N-linked (GlcNAc...) asparagine) is linked at Asn343.

It belongs to the peptidase M20A family. Zn(2+) serves as cofactor.

The protein localises to the secreted. This Ajellomyces dermatitidis (strain ER-3 / ATCC MYA-2586) (Blastomyces dermatitidis) protein is Probable carboxypeptidase BDCG_03757.